Here is a 329-residue protein sequence, read N- to C-terminus: Phosphoenolpyruvate transferase (329 aa).

7,8-didemethyl-8-hydroxy-5-deazariboflavin is bound at residue Asp61.

This sequence belongs to the CofD family. As to quaternary structure, homodimer. It depends on Mg(2+) as a cofactor.

The enzyme catalyses enolpyruvoyl-2-diphospho-5'-guanosine + 7,8-didemethyl-8-hydroxy-5-deazariboflavin = dehydro coenzyme F420-0 + GMP + H(+). The protein operates within cofactor biosynthesis; coenzyme F420 biosynthesis. In terms of biological role, catalyzes the transfer of the phosphoenolpyruvate moiety from enoylpyruvoyl-2-diphospho-5'-guanosine (EPPG) to 7,8-didemethyl-8-hydroxy-5-deazariboflavin (FO) with the formation of dehydro coenzyme F420-0 and GMP. The polypeptide is Phosphoenolpyruvate transferase (Mycobacterium ulcerans (strain Agy99)).